Here is a 190-residue protein sequence, read N- to C-terminus: Peptidyl-tRNA hydrolase (190 aa).

Tyr19 serves as a coordination point for tRNA. The active-site Proton acceptor is His24. Tyr72, Asn74, and Asn121 together coordinate tRNA.

This sequence belongs to the PTH family.

Its subcellular location is the mitochondrion. It catalyses the reaction an N-acyl-L-alpha-aminoacyl-tRNA + H2O = an N-acyl-L-amino acid + a tRNA + H(+). Peptidyl-tRNA hydrolase involved in the recycling of tRNA-Lys from diacetyl-lysyl-tRNA-Lys and is important for mitochondrial function. The sequence is that of Peptidyl-tRNA hydrolase (PTH1) from Saccharomyces cerevisiae (strain ATCC 204508 / S288c) (Baker's yeast).